The following is a 214-amino-acid chain: Adenylate kinase (214 aa).

10 to 15 (GAGKGT) is an ATP binding site. The NMP stretch occupies residues 30–59 (STGDMLRAAIKAGTELGLEAKRVMDEGKLV). Residues Thr31, Arg36, 57–59 (KLV), 85–88 (GFPR), and Gln92 contribute to the AMP site. The LID stretch occupies residues 122–159 (GRRVHPASGRVYHVVYNPPKVEGKDNETGDDLIVRDDD). ATP-binding positions include Arg123 and 132–133 (VY). Residues Arg156 and Arg167 each contribute to the AMP site. ATP is bound at residue Arg200.

Belongs to the adenylate kinase family. In terms of assembly, monomer.

It localises to the cytoplasm. The enzyme catalyses AMP + ATP = 2 ADP. It participates in purine metabolism; AMP biosynthesis via salvage pathway; AMP from ADP: step 1/1. Catalyzes the reversible transfer of the terminal phosphate group between ATP and AMP. Plays an important role in cellular energy homeostasis and in adenine nucleotide metabolism. This is Adenylate kinase from Alteromonas mediterranea (strain DSM 17117 / CIP 110805 / LMG 28347 / Deep ecotype).